The primary structure comprises 254 residues: 5'/3'-nucleotidase SurE (254 aa).

A divalent metal cation contacts are provided by Asp9, Asp10, Ser40, and Asn93.

This sequence belongs to the SurE nucleotidase family. A divalent metal cation is required as a cofactor.

The protein localises to the cytoplasm. It carries out the reaction a ribonucleoside 5'-phosphate + H2O = a ribonucleoside + phosphate. The enzyme catalyses a ribonucleoside 3'-phosphate + H2O = a ribonucleoside + phosphate. The catalysed reaction is [phosphate](n) + H2O = [phosphate](n-1) + phosphate + H(+). Nucleotidase with a broad substrate specificity as it can dephosphorylate various ribo- and deoxyribonucleoside 5'-monophosphates and ribonucleoside 3'-monophosphates with highest affinity to 3'-AMP. Also hydrolyzes polyphosphate (exopolyphosphatase activity) with the preference for short-chain-length substrates (P20-25). Might be involved in the regulation of dNTP and NTP pools, and in the turnover of 3'-mononucleotides produced by numerous intracellular RNases (T1, T2, and F) during the degradation of various RNAs. The polypeptide is 5'/3'-nucleotidase SurE (Yersinia pestis bv. Antiqua (strain Antiqua)).